A 36-amino-acid chain; its full sequence is Collagen alpha-2(I) chain (36 aa).

Residues 1–36 form a disordered region; the sequence is GSNGEPGSAGPPGPAGLRGLPGESGAVGPAGPPGSR. 4-hydroxyproline occurs at positions 6 and 12. Low complexity predominate over residues 15–29; that stretch reads AGLRGLPGESGAVGP. P33 is subject to 4-hydroxyproline.

The protein belongs to the fibrillar collagen family. In terms of assembly, trimers of one alpha 2(I) and two alpha 1(I) chains. Proline residues at the third position of the tripeptide repeating unit (G-X-Y) are hydroxylated in some or all of the chains.

Its subcellular location is the secreted. The protein resides in the extracellular space. It localises to the extracellular matrix. Its function is as follows. Type I collagen is a member of group I collagen (fibrillar forming collagen). In Brachylophosaurus canadensis (Campanian hadrosaur), this protein is Collagen alpha-2(I) chain.